Here is a 244-residue protein sequence, read N- to C-terminus: DNA repair protein RecO (244 aa).

The protein belongs to the RecO family.

Functionally, involved in DNA repair and RecF pathway recombination. In Caldicellulosiruptor bescii (strain ATCC BAA-1888 / DSM 6725 / KCTC 15123 / Z-1320) (Anaerocellum thermophilum), this protein is DNA repair protein RecO.